The sequence spans 175 residues: Adenine phosphoribosyltransferase (175 aa).

The protein belongs to the purine/pyrimidine phosphoribosyltransferase family. Homodimer.

It localises to the cytoplasm. It carries out the reaction AMP + diphosphate = 5-phospho-alpha-D-ribose 1-diphosphate + adenine. Its pathway is purine metabolism; AMP biosynthesis via salvage pathway; AMP from adenine: step 1/1. Catalyzes a salvage reaction resulting in the formation of AMP, that is energically less costly than de novo synthesis. The chain is Adenine phosphoribosyltransferase from Oenococcus oeni (strain ATCC BAA-331 / PSU-1).